The following is a 105-amino-acid chain: uncharacterized protein (105 aa).

Residues 13-35 form a helical membrane-spanning segment; it reads LLFAFVVVIVVLTLSYVYAQNII.

It localises to the membrane. This is an uncharacterized protein from Archaeoglobus fulgidus (strain ATCC 49558 / DSM 4304 / JCM 9628 / NBRC 100126 / VC-16).